The following is an 83-amino-acid chain: Small ribosomal subunit protein uS17 (83 aa).

This sequence belongs to the universal ribosomal protein uS17 family. As to quaternary structure, part of the 30S ribosomal subunit.

In terms of biological role, one of the primary rRNA binding proteins, it binds specifically to the 5'-end of 16S ribosomal RNA. The sequence is that of Small ribosomal subunit protein uS17 from Acaryochloris marina (strain MBIC 11017).